A 520-amino-acid polypeptide reads, in one-letter code: Peptide chain release factor 3 (520 aa).

The tr-type G domain occupies 8-277 (ESRKTFAIIS…FAPMPNARQT (270 aa)). Residues 17-24 (SHPDAGKT), 85-89 (DTPGH), and 139-142 (NKLD) each bind GTP.

It belongs to the TRAFAC class translation factor GTPase superfamily. Classic translation factor GTPase family. PrfC subfamily.

The protein resides in the cytoplasm. Increases the formation of ribosomal termination complexes and stimulates activities of RF-1 and RF-2. It binds guanine nucleotides and has strong preference for UGA stop codons. It may interact directly with the ribosome. The stimulation of RF-1 and RF-2 is significantly reduced by GTP and GDP, but not by GMP. The polypeptide is Peptide chain release factor 3 (Staphylococcus aureus (strain USA300 / TCH1516)).